The sequence spans 434 residues: 3-phosphoshikimate 1-carboxyvinyltransferase (434 aa).

3 residues coordinate 3-phosphoshikimate: K22, S23, and R27. K22 serves as a coordination point for phosphoenolpyruvate. 2 residues coordinate phosphoenolpyruvate: G93 and R121. Residues S168, S169, Q170, S199, D320, and K347 each coordinate 3-phosphoshikimate. Q170 provides a ligand contact to phosphoenolpyruvate. The Proton acceptor role is filled by D320. Residues R351, R394, and K419 each contribute to the phosphoenolpyruvate site.

It belongs to the EPSP synthase family. In terms of assembly, monomer.

The protein resides in the cytoplasm. It carries out the reaction 3-phosphoshikimate + phosphoenolpyruvate = 5-O-(1-carboxyvinyl)-3-phosphoshikimate + phosphate. Its pathway is metabolic intermediate biosynthesis; chorismate biosynthesis; chorismate from D-erythrose 4-phosphate and phosphoenolpyruvate: step 6/7. Catalyzes the transfer of the enolpyruvyl moiety of phosphoenolpyruvate (PEP) to the 5-hydroxyl of shikimate-3-phosphate (S3P) to produce enolpyruvyl shikimate-3-phosphate and inorganic phosphate. This chain is 3-phosphoshikimate 1-carboxyvinyltransferase, found in Burkholderia cenocepacia (strain ATCC BAA-245 / DSM 16553 / LMG 16656 / NCTC 13227 / J2315 / CF5610) (Burkholderia cepacia (strain J2315)).